A 559-amino-acid polypeptide reads, in one-letter code: Pentatricopeptide repeat-containing protein At2g42920, chloroplastic (559 aa).

Residues 1–14 (MSPTILSFSGVTVP) constitute a chloroplast transit peptide. 10 PPR repeats span residues 88–122 (NPFV…SPSV), 125–159 (QRLT…GLED), 160–190 (DSFI…MIGF), 191–221 (DVVA…MPQR), 222–256 (NGVS…DVKP), 257–291 (DGFT…RFEL), 292–322 (NSIV…APKK), 323–357 (QLSC…GLEP), 358–388 (DSVS…MKEK), and 394–424 (SIKH…MPVE). The type E motif stretch occupies residues 429-504 (IWSSLLSACR…EVGCSSIEVD (76 aa)). Residues 505–535 (FEVHEFISCGGTHPKSAEIYSLLDILNWDVS) form a type E(+) motif region.

It belongs to the PPR family. PCMP-E subfamily.

The protein resides in the plastid. The protein localises to the chloroplast. This chain is Pentatricopeptide repeat-containing protein At2g42920, chloroplastic (PCMP-E75), found in Arabidopsis thaliana (Mouse-ear cress).